The following is an 83-amino-acid chain: MVVIRLARGGAKKRPFFNIVATDSRNRRDGRFIERIGFYNPVASGAEESVRIAQDRLAYWQGVGAQLSPTVARLVAQAGKAAA.

It belongs to the bacterial ribosomal protein bS16 family.

The chain is Small ribosomal subunit protein bS16 from Herminiimonas arsenicoxydans.